The primary structure comprises 80 residues: Putative ankyrin repeat protein RC0877 (80 aa).

The stretch at 6–46 (SGGIPLHAVAKNVRCTSKDIKDYEIYKLLVSYGADINARVE) is one ANK repeat.

This chain is Putative ankyrin repeat protein RC0877, found in Rickettsia conorii (strain ATCC VR-613 / Malish 7).